Reading from the N-terminus, the 177-residue chain is Ribosome maturation factor RimP (177 aa).

Belongs to the RimP family.

It is found in the cytoplasm. Functionally, required for maturation of 30S ribosomal subunits. In Streptococcus sanguinis (strain SK36), this protein is Ribosome maturation factor RimP.